An 83-amino-acid chain; its full sequence is uncharacterized protein (83 aa).

A helical transmembrane segment spans residues 50–70; sequence IMVFLGEAWIILIPFAIFCII.

It belongs to the plectrovirus ORF7 family.

It localises to the host membrane. This is an uncharacterized protein from Spiroplasma citri (SpV1).